Consider the following 379-residue polypeptide: Probable protein arginine N-methyltransferase 6.1 (379 aa).

Residues M1–A35 form a disordered region. A compositionally biased stretch (low complexity) spans L19 to A35. An SAM-dependent MTase PRMT-type domain is found at D45–M379. S-adenosyl-L-methionine-binding residues include H58, R67, G91, E113, and E142. Active-site residues include E156 and E165.

The protein belongs to the class I-like SAM-binding methyltransferase superfamily. Protein arginine N-methyltransferase family. PRMT6 subfamily.

Arginine methyltransferase that can both catalyze the formation of omega-N monomethylarginine (MMA) and asymmetrical dimethylarginine (aDMA). The protein is Probable protein arginine N-methyltransferase 6.1 (PRMT6.1) of Oryza sativa subsp. indica (Rice).